The chain runs to 127 residues: Vacuolar ATPase assembly integral membrane protein VMA21 (127 aa).

A disordered region spans residues Met1 to Leu28. At Met1–Gln45 the chain is on the cytoplasmic side. A helical membrane pass occupies residues Val46–Phe66. The Lumenal portion of the chain corresponds to Tyr67–Tyr79. The chain crosses the membrane as a helical span at residues Ala80–Met100. The Cytoplasmic portion of the chain corresponds to Arg101–Lys127. The interval Gln107 to Lys127 is disordered. Residues Gly118–Lys127 are compositionally biased toward basic and acidic residues. The Prevents secretion from ER motif lies at Lys124–Lys127.

The protein belongs to the VMA21 family.

Its subcellular location is the endoplasmic reticulum membrane. It localises to the endoplasmic reticulum-Golgi intermediate compartment membrane. It is found in the cytoplasmic vesicle. The protein localises to the COPII-coated vesicle membrane. In terms of biological role, required for the assembly of the V0 complex of the vacuolar ATPase (V-ATPase) in the endoplasmic reticulum. The protein is Vacuolar ATPase assembly integral membrane protein VMA21 of Coccidioides immitis (strain RS) (Valley fever fungus).